The sequence spans 192 residues: Fe/S biogenesis protein NfuA (192 aa).

Positions 149 and 152 each coordinate [4Fe-4S] cluster.

Belongs to the NfuA family. In terms of assembly, homodimer. The cofactor is [4Fe-4S] cluster.

In terms of biological role, involved in iron-sulfur cluster biogenesis. Binds a 4Fe-4S cluster, can transfer this cluster to apoproteins, and thereby intervenes in the maturation of Fe/S proteins. Could also act as a scaffold/chaperone for damaged Fe/S proteins. This Shewanella halifaxensis (strain HAW-EB4) protein is Fe/S biogenesis protein NfuA.